Reading from the N-terminus, the 121-residue chain is Small ribosomal subunit protein uS12c (121 aa).

Belongs to the universal ribosomal protein uS12 family. As to quaternary structure, part of the 30S ribosomal subunit.

It is found in the plastid. The protein resides in the chloroplast. In terms of biological role, with S4 and S5 plays an important role in translational accuracy. Located at the interface of the 30S and 50S subunits. The sequence is that of Small ribosomal subunit protein uS12c (rps12) from Bigelowiella natans (Pedinomonas minutissima).